Consider the following 31-residue polypeptide: 23S rRNA methylase leader peptide (31 aa).

Functionally, this peptide is involved in the control mechanism of the synthesis of the erythromycin resistance protein. The protein is 23S rRNA methylase leader peptide (ermC) of Escherichia coli.